A 365-amino-acid polypeptide reads, in one-letter code: Peptide chain release factor 1 (365 aa).

Gln240 carries the N5-methylglutamine modification.

The protein belongs to the prokaryotic/mitochondrial release factor family. In terms of processing, methylated by PrmC. Methylation increases the termination efficiency of RF1.

The protein resides in the cytoplasm. In terms of biological role, peptide chain release factor 1 directs the termination of translation in response to the peptide chain termination codons UAG and UAA. The sequence is that of Peptide chain release factor 1 from Bifidobacterium animalis subsp. lactis (strain AD011).